We begin with the raw amino-acid sequence, 151 residues long: Pyruvoyl-dependent arginine decarboxylase (151 aa).

Ser42 is subject to Pyruvic acid (Ser).

The protein belongs to the PdaD family. Pyruvate is required as a cofactor.

The catalysed reaction is L-arginine + H(+) = agmatine + CO2. The polypeptide is Pyruvoyl-dependent arginine decarboxylase (Methanothermobacter thermautotrophicus (strain ATCC 29096 / DSM 1053 / JCM 10044 / NBRC 100330 / Delta H) (Methanobacterium thermoautotrophicum)).